A 557-amino-acid chain; its full sequence is Dihydroxy-acid dehydratase (557 aa).

Cysteine 49 is a [2Fe-2S] cluster binding site. Mg(2+) is bound at residue aspartate 81. Cysteine 122 is a [2Fe-2S] cluster binding site. Mg(2+) is bound by residues aspartate 123 and lysine 124. Lysine 124 carries the N6-carboxylysine modification. Cysteine 194 serves as a coordination point for [2Fe-2S] cluster. Glutamate 446 is a Mg(2+) binding site. The active-site Proton acceptor is the serine 472.

This sequence belongs to the IlvD/Edd family. In terms of assembly, homodimer. The cofactor is [2Fe-2S] cluster. Requires Mg(2+) as cofactor.

It catalyses the reaction (2R)-2,3-dihydroxy-3-methylbutanoate = 3-methyl-2-oxobutanoate + H2O. The enzyme catalyses (2R,3R)-2,3-dihydroxy-3-methylpentanoate = (S)-3-methyl-2-oxopentanoate + H2O. The protein operates within amino-acid biosynthesis; L-isoleucine biosynthesis; L-isoleucine from 2-oxobutanoate: step 3/4. It participates in amino-acid biosynthesis; L-valine biosynthesis; L-valine from pyruvate: step 3/4. Functions in the biosynthesis of branched-chain amino acids. Catalyzes the dehydration of (2R,3R)-2,3-dihydroxy-3-methylpentanoate (2,3-dihydroxy-3-methylvalerate) into 2-oxo-3-methylpentanoate (2-oxo-3-methylvalerate) and of (2R)-2,3-dihydroxy-3-methylbutanoate (2,3-dihydroxyisovalerate) into 2-oxo-3-methylbutanoate (2-oxoisovalerate), the penultimate precursor to L-isoleucine and L-valine, respectively. The sequence is that of Dihydroxy-acid dehydratase from Prochlorococcus marinus (strain MIT 9312).